The sequence spans 206 residues: Large ribosomal subunit protein uL4 (206 aa).

The segment at 63–96 (MYKQKGTGRARHHSARAPQFRGGGKAHGPVVRSH) is disordered. Over residues 64–77 (YKQKGTGRARHHSA) the composition is skewed to basic residues.

It belongs to the universal ribosomal protein uL4 family. In terms of assembly, part of the 50S ribosomal subunit.

Its function is as follows. One of the primary rRNA binding proteins, this protein initially binds near the 5'-end of the 23S rRNA. It is important during the early stages of 50S assembly. It makes multiple contacts with different domains of the 23S rRNA in the assembled 50S subunit and ribosome. Functionally, forms part of the polypeptide exit tunnel. The polypeptide is Large ribosomal subunit protein uL4 (Allorhizobium ampelinum (strain ATCC BAA-846 / DSM 112012 / S4) (Agrobacterium vitis (strain S4))).